The chain runs to 932 residues: Lon protease homolog 2, peroxisomal (932 aa).

Residues 11 to 260 form the Lon N-terminal domain; that stretch reads LSLVPLPKGS…RVVDILNKQN (250 aa). A disordered region spans residues 298–328; the sequence is RRGIPGASGTPPPGLGGRNNEADEKESNELD. A compositionally biased stretch (basic and acidic residues) spans 317–328; it reads NEADEKESNELD. An ATP-binding site is contributed by 486–493; sequence GPPGTGKT. In terms of domain architecture, Lon proteolytic spans 729 to 916; that stretch reads HGRPGVVTGL…WEAIRHIWPD (188 aa). Catalysis depends on residues S822 and K865. Positions 930-932 match the Microbody targeting signal motif; the sequence is SRL.

Belongs to the peptidase S16 family.

It is found in the peroxisome matrix. It catalyses the reaction Hydrolysis of proteins in presence of ATP.. Functionally, ATP-dependent serine protease that mediates the selective degradation of misfolded and unassembled polypeptides in the peroxisomal matrix. Necessary for type 2 peroxisome targeting signal (PTS2)-containing protein processing and facilitates peroxisome matrix protein import. The chain is Lon protease homolog 2, peroxisomal from Emericella nidulans (strain FGSC A4 / ATCC 38163 / CBS 112.46 / NRRL 194 / M139) (Aspergillus nidulans).